A 285-amino-acid polypeptide reads, in one-letter code: Bifunctional protein FolD (285 aa).

NADP(+)-binding positions include 165 to 167 (GRS) and serine 190.

Belongs to the tetrahydrofolate dehydrogenase/cyclohydrolase family. As to quaternary structure, homodimer.

It catalyses the reaction (6R)-5,10-methylene-5,6,7,8-tetrahydrofolate + NADP(+) = (6R)-5,10-methenyltetrahydrofolate + NADPH. It carries out the reaction (6R)-5,10-methenyltetrahydrofolate + H2O = (6R)-10-formyltetrahydrofolate + H(+). It participates in one-carbon metabolism; tetrahydrofolate interconversion. Functionally, catalyzes the oxidation of 5,10-methylenetetrahydrofolate to 5,10-methenyltetrahydrofolate and then the hydrolysis of 5,10-methenyltetrahydrofolate to 10-formyltetrahydrofolate. This is Bifunctional protein FolD from Staphylococcus haemolyticus (strain JCSC1435).